Here is a 458-residue protein sequence, read N- to C-terminus: Glutamyl-tRNA(Gln) amidotransferase subunit D (458 aa).

One can recognise an Asparaginase/glutaminase domain in the interval 97–434 (PNVSVMSTGG…KEVERLMRTN (338 aa)). Residues Thr107, Thr185, Asp186, and Lys264 contribute to the active site.

Belongs to the asparaginase 1 family. GatD subfamily. As to quaternary structure, heterodimer of GatD and GatE.

It carries out the reaction L-glutamyl-tRNA(Gln) + L-glutamine + ATP + H2O = L-glutaminyl-tRNA(Gln) + L-glutamate + ADP + phosphate + H(+). Its function is as follows. Allows the formation of correctly charged Gln-tRNA(Gln) through the transamidation of misacylated Glu-tRNA(Gln) in organisms which lack glutaminyl-tRNA synthetase. The reaction takes place in the presence of glutamine and ATP through an activated gamma-phospho-Glu-tRNA(Gln). The GatDE system is specific for glutamate and does not act on aspartate. The polypeptide is Glutamyl-tRNA(Gln) amidotransferase subunit D (Methanopyrus kandleri (strain AV19 / DSM 6324 / JCM 9639 / NBRC 100938)).